We begin with the raw amino-acid sequence, 180 residues long: Inner membrane-spanning protein YciB (180 aa).

5 helical membrane-spanning segments follow: residues 25 to 45 (QNAT…CYII), 49 to 69 (VSKL…ITLI), 76 to 96 (IKIK…MSGI), 118 to 138 (ITLS…NEIV), and 150 to 170 (FKVF…LPLL).

It belongs to the YciB family.

The protein resides in the cell inner membrane. In terms of biological role, plays a role in cell envelope biogenesis, maintenance of cell envelope integrity and membrane homeostasis. The sequence is that of Inner membrane-spanning protein YciB from Rickettsia akari (strain Hartford).